A 340-amino-acid polypeptide reads, in one-letter code: DNA-directed RNA polymerase subunit alpha (340 aa).

The tract at residues 1-233 (MIRDEISVST…DLFIPFLRAE (233 aa)) is alpha N-terminal domain (alpha-NTD). The tract at residues 268-340 (AFKHIFIDQS…DLPKNKFQIH (73 aa)) is alpha C-terminal domain (alpha-CTD).

This sequence belongs to the RNA polymerase alpha chain family. As to quaternary structure, in plastids the minimal PEP RNA polymerase catalytic core is composed of four subunits: alpha, beta, beta', and beta''. When a (nuclear-encoded) sigma factor is associated with the core the holoenzyme is formed, which can initiate transcription.

Its subcellular location is the plastid. It localises to the chloroplast. The enzyme catalyses RNA(n) + a ribonucleoside 5'-triphosphate = RNA(n+1) + diphosphate. In terms of biological role, DNA-dependent RNA polymerase catalyzes the transcription of DNA into RNA using the four ribonucleoside triphosphates as substrates. In Cycas taitungensis (Prince sago), this protein is DNA-directed RNA polymerase subunit alpha.